The sequence spans 271 residues: MPPTVFIVSDGTGITAETFAHSILSQFDQKFRLVRVPFVDSTEKAYATLEKINEAIVQDGRRPIVFTTLVDSASNQIVKGSNALVLDMFQTFVEPLEQELELKSSHAMGRGHQNADTEEYKNRIEAINFSLAHDDGQSNRNLADADVILVGVSRSGKTPTSLYLAMQYGVKAANYPLIPEDFERGKLPTPLLAHRQKMFGLSIDPQRLSEIRNERRPGSKYAAPENCRYEINEAEAMMRREGIKWLSSTHKSIEEIATTILQEIKLDRPSY.

An ADP-binding site is contributed by 151–158 (GVSRSGKT).

Belongs to the pyruvate, phosphate/water dikinase regulatory protein family. PSRP subfamily.

The enzyme catalyses [pyruvate, water dikinase] + ADP = [pyruvate, water dikinase]-phosphate + AMP + H(+). It catalyses the reaction [pyruvate, water dikinase]-phosphate + phosphate + H(+) = [pyruvate, water dikinase] + diphosphate. Functionally, bifunctional serine/threonine kinase and phosphorylase involved in the regulation of the phosphoenolpyruvate synthase (PEPS) by catalyzing its phosphorylation/dephosphorylation. The protein is Putative phosphoenolpyruvate synthase regulatory protein of Paraburkholderia phytofirmans (strain DSM 17436 / LMG 22146 / PsJN) (Burkholderia phytofirmans).